The following is a 336-amino-acid chain: MTLPILLGWFLTLCSSHIVRSCLQCDQVIRYVHEDFLSTVKGIRVRDQIELKKIIDHAYTNYRETSKLLSGVIDPTTLYRARTEYQSEFKRHWKEDRTNSLQWDLITIVEKGKRILQKHLEIFIAEGLCPNKCGLLYQRVMNCTSCQYGLFTCLSAKPPLDCGEHHLEADEGEEVVLDCFLSWHTLVVGQTEYHYSWHPGETNVLFDGEYEELVVTKESKIVLNQLSVSEEGSYRCLLKDQKGTALSRTFFQLEVKPFPSTSPRQVVTLPSLPLGYENTPYSLQKSSFLTVLILLTVLSITGSLIIIEYLRKSLKRQEEARGRDSRTAGDIELNTE.

The first 16 residues, 1-16 (MTLPILLGWFLTLCSS), serve as a signal peptide directing secretion. Positions 158 to 247 (PPLDCGEHHL…LKDQKGTALS (90 aa)) constitute an Ig-like C2-type domain. A disulfide bond links Cys179 and Cys236. A helical transmembrane segment spans residues 287 to 307 (SFLTVLILLTVLSITGSLIII).

This sequence belongs to the Izumo family. In terms of assembly, forms a complex with tmem81 and spaca6 on spermatocyte cell membrane. The complex binds to oocyte protein bncr. In terms of tissue distribution, expressed in sperm.

The protein resides in the cell membrane. Its subcellular location is the cytoplasmic vesicle. It is found in the secretory vesicle. The protein localises to the acrosome membrane. In terms of biological role, essential sperm cell-surface protein required for fertilization by acting as a ligand for bncr receptor on egg. The interaction of the complex izumo1:spaca6:tmemt81 with bncr is a necessary adhesion event between sperm and egg that is required for fertilization. The protein is Izumo sperm-egg fusion protein 1 of Danio rerio (Zebrafish).